The primary structure comprises 867 residues: Mitochondrial escape protein 2 (867 aa).

Disordered stretches follow at residues methionine 1–arginine 20 and arginine 44–glycine 66. A mitochondrion-targeting transit peptide spans methionine 1–alanine 41. Residues histidine 42–arginine 308 are Mitochondrial matrix-facing. Low complexity predominate over residues alanine 48–threonine 59. Residues serine 203–arginine 293 enclose the RRM domain. The helical transmembrane segment at isoleucine 309–isoleucine 329 threads the bilayer. At arginine 330–glycine 867 the chain is on the mitochondrial intermembrane side. The span at phenylalanine 614–serine 639 shows a compositional bias: basic and acidic residues. Residues phenylalanine 614–proline 647 are disordered. Positions leucine 797–methionine 857 form a coiled coil.

It belongs to the YME2 family.

It is found in the mitochondrion inner membrane. In terms of biological role, plays a role in maintaining the mitochondrial genome and in controlling the mtDNA escape. Involved in the regulation of mtDNA nucleotide structure and number. May have a dispensable role in early maturation of pre-rRNA. The polypeptide is Mitochondrial escape protein 2 (msp-45) (Neurospora crassa (strain ATCC 24698 / 74-OR23-1A / CBS 708.71 / DSM 1257 / FGSC 987)).